A 338-amino-acid chain; its full sequence is Holliday junction branch migration complex subunit RuvB (338 aa).

Residues 1–181 (MDRIVEIEKV…FGMDFRLQFY (181 aa)) are large ATPase domain (RuvB-L). Residues Leu20, Arg21, Gly62, Lys65, Thr66, Thr67, 128–130 (EDF), Arg171, Tyr181, and Arg218 contribute to the ATP site. Thr66 serves as a coordination point for Mg(2+). Residues 182–252 (STAELSRIIQ…RAKEGLNALG (71 aa)) form a small ATPAse domain (RuvB-S) region. The head domain (RuvB-H) stretch occupies residues 255-338 (SLGFDEMDIK…NRTKGLFDGE (84 aa)). Positions 309 and 314 each coordinate DNA.

It belongs to the RuvB family. As to quaternary structure, homohexamer. Forms an RuvA(8)-RuvB(12)-Holliday junction (HJ) complex. HJ DNA is sandwiched between 2 RuvA tetramers; dsDNA enters through RuvA and exits via RuvB. An RuvB hexamer assembles on each DNA strand where it exits the tetramer. Each RuvB hexamer is contacted by two RuvA subunits (via domain III) on 2 adjacent RuvB subunits; this complex drives branch migration. In the full resolvosome a probable DNA-RuvA(4)-RuvB(12)-RuvC(2) complex forms which resolves the HJ.

It localises to the cytoplasm. The catalysed reaction is ATP + H2O = ADP + phosphate + H(+). Its function is as follows. The RuvA-RuvB-RuvC complex processes Holliday junction (HJ) DNA during genetic recombination and DNA repair, while the RuvA-RuvB complex plays an important role in the rescue of blocked DNA replication forks via replication fork reversal (RFR). RuvA specifically binds to HJ cruciform DNA, conferring on it an open structure. The RuvB hexamer acts as an ATP-dependent pump, pulling dsDNA into and through the RuvAB complex. RuvB forms 2 homohexamers on either side of HJ DNA bound by 1 or 2 RuvA tetramers; 4 subunits per hexamer contact DNA at a time. Coordinated motions by a converter formed by DNA-disengaged RuvB subunits stimulates ATP hydrolysis and nucleotide exchange. Immobilization of the converter enables RuvB to convert the ATP-contained energy into a lever motion, pulling 2 nucleotides of DNA out of the RuvA tetramer per ATP hydrolyzed, thus driving DNA branch migration. The RuvB motors rotate together with the DNA substrate, which together with the progressing nucleotide cycle form the mechanistic basis for DNA recombination by continuous HJ branch migration. Branch migration allows RuvC to scan DNA until it finds its consensus sequence, where it cleaves and resolves cruciform DNA. This chain is Holliday junction branch migration complex subunit RuvB, found in Campylobacter curvus (strain 525.92).